The sequence spans 242 residues: DnaJ homolog subfamily B member 3 (242 aa).

The 69-residue stretch at 1 to 69 (MVDYYEVLGV…RKREVYDRCG (69 aa)) folds into the J domain.

Testis specific. Expression is confined to the germline without any contribution of the somatic components.

Its function is as follows. May operate as a co-chaperone of the male germ cell- and haploid stage-specific Hsp70 proteins. This Mus musculus (Mouse) protein is DnaJ homolog subfamily B member 3 (Dnajb3).